A 64-amino-acid chain; its full sequence is uncharacterized protein (64 aa).

The tract at residues 35 to 64 (TIRKPPIEHAAGPLGSTSRAGHRSYGGVAS) is disordered.

This is an uncharacterized protein from Mycobacterium tuberculosis (strain ATCC 25618 / H37Rv).